A 30-amino-acid polypeptide reads, in one-letter code: Photosystem I reaction center subunit XII (30 aa).

Residues 7–26 (IFVALLFALVSAVLAIRLGK) traverse the membrane as a helical segment.

This sequence belongs to the PsaM family.

It localises to the plastid. The protein localises to the chloroplast thylakoid membrane. The protein is Photosystem I reaction center subunit XII of Porphyra purpurea (Red seaweed).